A 378-amino-acid polypeptide reads, in one-letter code: uncharacterized protein (378 aa).

Belongs to the mimivirus L17x/L18x family.

This is an uncharacterized protein from Acanthamoeba polyphaga (Amoeba).